The chain runs to 480 residues: Probable pectin lyase F-2 (480 aa).

Residues 1–25 (MTLIRTVLMAAALLGASAHAQGVVG) form the signal peptide. Cys83 and Cys106 are joined by a disulfide. Asn111 carries N-linked (GlcNAc...) asparagine glycosylation. Residue Arg256 is part of the active site. A disulfide bridge connects residues Cys322 and Cys330. The span at 386–401 (SSSAIPSSTPAPSSSA) shows a compositional bias: low complexity. The tract at residues 386 to 436 (SSSAIPSSTPAPSSSALAKRHGGHDRHGLGHIPHLTEGGPGAWHTPGPAPS) is disordered.

The protein belongs to the polysaccharide lyase 1 family.

The protein resides in the secreted. The enzyme catalyses Eliminative cleavage of (1-&gt;4)-alpha-D-galacturonan methyl ester to give oligosaccharides with 4-deoxy-6-O-methyl-alpha-D-galact-4-enuronosyl groups at their non-reducing ends.. Pectinolytic enzymes consist of four classes of enzymes: pectin lyase, polygalacturonase, pectin methylesterase and rhamnogalacturonase. Among pectinolytic enzymes, pectin lyase is the most important in depolymerization of pectin, since it cleaves internal glycosidic bonds of highly methylated pectins. This chain is Probable pectin lyase F-2 (pelF-2), found in Aspergillus terreus (strain NIH 2624 / FGSC A1156).